The chain runs to 252 residues: tRNA (guanine-N(1)-)-methyltransferase (252 aa).

S-adenosyl-L-methionine-binding positions include glycine 110 and 130 to 135; that span reads VGDFVL.

It belongs to the RNA methyltransferase TrmD family. In terms of assembly, homodimer.

It localises to the cytoplasm. It catalyses the reaction guanosine(37) in tRNA + S-adenosyl-L-methionine = N(1)-methylguanosine(37) in tRNA + S-adenosyl-L-homocysteine + H(+). Its function is as follows. Specifically methylates guanosine-37 in various tRNAs. This is tRNA (guanine-N(1)-)-methyltransferase from Magnetococcus marinus (strain ATCC BAA-1437 / JCM 17883 / MC-1).